We begin with the raw amino-acid sequence, 143 residues long: Nucleoside diphosphate kinase (143 aa).

Residues Lys11, Phe59, Arg87, Thr93, Arg104, and Asn114 each coordinate ATP. His117 functions as the Pros-phosphohistidine intermediate in the catalytic mechanism.

The protein belongs to the NDK family. As to quaternary structure, homotetramer. The cofactor is Mg(2+).

It is found in the cytoplasm. It catalyses the reaction a 2'-deoxyribonucleoside 5'-diphosphate + ATP = a 2'-deoxyribonucleoside 5'-triphosphate + ADP. The enzyme catalyses a ribonucleoside 5'-diphosphate + ATP = a ribonucleoside 5'-triphosphate + ADP. Its function is as follows. Major role in the synthesis of nucleoside triphosphates other than ATP. The ATP gamma phosphate is transferred to the NDP beta phosphate via a ping-pong mechanism, using a phosphorylated active-site intermediate. The chain is Nucleoside diphosphate kinase from Shewanella sp. (strain ANA-3).